A 203-amino-acid polypeptide reads, in one-letter code: Small ribosomal subunit protein uS4c (203 aa).

An S4 RNA-binding domain is found at 89 to 152 (MRLDNILFRL…QSRTLIQNSL (64 aa)).

Belongs to the universal ribosomal protein uS4 family. Part of the 30S ribosomal subunit. Contacts protein S5. The interaction surface between S4 and S5 is involved in control of translational fidelity.

The protein localises to the plastid. Its function is as follows. One of the primary rRNA binding proteins, it binds directly to 16S rRNA where it nucleates assembly of the body of the 30S subunit. In terms of biological role, with S5 and S12 plays an important role in translational accuracy. The sequence is that of Small ribosomal subunit protein uS4c (rps4) from Orobanche minor (Small broomrape).